Reading from the N-terminus, the 475-residue chain is Protein FIZZY-RELATED 1 (475 aa).

Positions 1–27 (MEEDESTTPKKKSDSQLNLPPSMNRPT) are disordered. Positions 15–27 (SQLNLPPSMNRPT) are enriched in polar residues. WD repeat units lie at residues 166 to 203 (QDDF…VTKL), 207 to 246 (GVDE…NIRT), 249 to 289 (GHRL…SKLK), 290 to 329 (GHKS…PVLR), 332 to 374 (EHAA…HLNC), 376 to 417 (DTNS…KLAT), and 420 to 459 (GHSY…KSQS).

Belongs to the WD repeat CDC20/Fizzy family. As to quaternary structure, associates with the APC/C complex. Interacts with CDC20-1, CDC20-2, CYCA1-1, CYCA1-2, CYCA3-4, CYCB1-1 and CYCB1-2. Binds to GIG1. As to expression, expressed in the root tip, predominantly in the root cap, quiescent center cells, surrounding stem cells and columella.

The protein resides in the nucleus. The protein operates within protein modification; protein ubiquitination. Activator protein that regulates the ubiquitin ligase activity and substrate specificity of the anaphase promoting complex/cyclosome (APC/C). Required for meristem organization and maintenance of quiescent center identity and stem cells. This Arabidopsis thaliana (Mouse-ear cress) protein is Protein FIZZY-RELATED 1 (FZR1).